Reading from the N-terminus, the 194-residue chain is Ion-translocating oxidoreductase complex subunit A (194 aa).

6 helical membrane passes run 4 to 24 (LVLI…QFLG), 39 to 59 (IGLS…SYLV), 71 to 91 (FLRT…TEMV), 102 to 122 (VLGI…VALL), 131 to 151 (FITA…VLVL), and 172 to 192 (AIGM…AGLI).

Belongs to the NqrDE/RnfAE family. The complex is composed of six subunits: RnfA, RnfB, RnfC, RnfD, RnfE and RnfG.

Its subcellular location is the cell inner membrane. Its function is as follows. Part of a membrane-bound complex that couples electron transfer with translocation of ions across the membrane. The chain is Ion-translocating oxidoreductase complex subunit A from Ectopseudomonas mendocina (strain ymp) (Pseudomonas mendocina).